Here is a 318-residue protein sequence, read N- to C-terminus: 4-hydroxy-3-methylbut-2-enyl diphosphate reductase (318 aa).

C12 serves as a coordination point for [4Fe-4S] cluster. Residues H41 and H74 each coordinate (2E)-4-hydroxy-3-methylbut-2-enyl diphosphate. Dimethylallyl diphosphate-binding residues include H41 and H74. Positions 41 and 74 each coordinate isopentenyl diphosphate. C96 serves as a coordination point for [4Fe-4S] cluster. A (2E)-4-hydroxy-3-methylbut-2-enyl diphosphate-binding site is contributed by H124. H124 serves as a coordination point for dimethylallyl diphosphate. Position 124 (H124) interacts with isopentenyl diphosphate. The active-site Proton donor is the E126. T167 is a binding site for (2E)-4-hydroxy-3-methylbut-2-enyl diphosphate. C197 contributes to the [4Fe-4S] cluster binding site. (2E)-4-hydroxy-3-methylbut-2-enyl diphosphate contacts are provided by S225, S226, N227, and S269. Residues S225, S226, N227, and S269 each contribute to the dimethylallyl diphosphate site. Positions 225, 226, 227, and 269 each coordinate isopentenyl diphosphate.

This sequence belongs to the IspH family. The cofactor is [4Fe-4S] cluster.

It catalyses the reaction isopentenyl diphosphate + 2 oxidized [2Fe-2S]-[ferredoxin] + H2O = (2E)-4-hydroxy-3-methylbut-2-enyl diphosphate + 2 reduced [2Fe-2S]-[ferredoxin] + 2 H(+). The catalysed reaction is dimethylallyl diphosphate + 2 oxidized [2Fe-2S]-[ferredoxin] + H2O = (2E)-4-hydroxy-3-methylbut-2-enyl diphosphate + 2 reduced [2Fe-2S]-[ferredoxin] + 2 H(+). Its pathway is isoprenoid biosynthesis; dimethylallyl diphosphate biosynthesis; dimethylallyl diphosphate from (2E)-4-hydroxy-3-methylbutenyl diphosphate: step 1/1. It functions in the pathway isoprenoid biosynthesis; isopentenyl diphosphate biosynthesis via DXP pathway; isopentenyl diphosphate from 1-deoxy-D-xylulose 5-phosphate: step 6/6. Catalyzes the conversion of 1-hydroxy-2-methyl-2-(E)-butenyl 4-diphosphate (HMBPP) into a mixture of isopentenyl diphosphate (IPP) and dimethylallyl diphosphate (DMAPP). Acts in the terminal step of the DOXP/MEP pathway for isoprenoid precursor biosynthesis. This chain is 4-hydroxy-3-methylbut-2-enyl diphosphate reductase, found in Francisella tularensis subsp. holarctica (strain LVS).